A 430-amino-acid polypeptide reads, in one-letter code: Threonine synthase (430 aa).

Lys108 carries the N6-(pyridoxal phosphate)lysine modification.

It belongs to the threonine synthase family. Pyridoxal 5'-phosphate is required as a cofactor.

It catalyses the reaction O-phospho-L-homoserine + H2O = L-threonine + phosphate. It participates in amino-acid biosynthesis; L-threonine biosynthesis; L-threonine from L-aspartate: step 5/5. Catalyzes the gamma-elimination of phosphate from L-phosphohomoserine and the beta-addition of water to produce L-threonine. The polypeptide is Threonine synthase (thrC) (Buchnera aphidicola subsp. Baizongia pistaciae (strain Bp)).